Consider the following 68-residue polypeptide: Large ribosomal subunit protein uL30 (68 aa).

It belongs to the universal ribosomal protein uL30 family. Part of the 50S ribosomal subunit.

This chain is Large ribosomal subunit protein uL30, found in Paenarthrobacter aurescens (strain TC1).